The chain runs to 235 residues: Exotoxin type C (235 aa).

Positions 1–27 (MKKINIIKIVFIITVILISTISPIIKS) are cleaved as a signal peptide. Residues His-194, His-228, and Asp-230 each coordinate Zn(2+).

Belongs to the staphylococcal/streptococcal toxin family.

In terms of biological role, superantigen that acts as a causative agent of the symptoms associated with scarlet fever. Has been associated with streptococcal toxic shock-like disease and may play a role in the early events of rheumatic fever. Superantigens cross-link major histocompatibility complex (MHC) class II and T-cell receptor (TCR) molecules, resulting in an overstimulation of T-cells associated with a massive release of pyrogenic and inflammatory cytokines. This Streptococcus pyogenes serotype M18 (strain MGAS8232) protein is Exotoxin type C.